Consider the following 270-residue polypeptide: Zinc finger protein ZAT2 (270 aa).

Polar residues-rich tracts occupy residues 1–28 (MSNT…YNQN) and 36–48 (LTNN…SSSP). The tract at residues 1–64 (MSNTSNSDPN…QPDPDASQIA (64 aa)) is disordered. The segment at 65–87 (RPCTECGKQFGSLKALFGHMRCH) adopts a C2H2-type 1 zinc-finger fold. The disordered stretch occupies residues 95–119 (INPPSNFKRRINSNAASSSSSWDPS). Residues 106 to 115 (NSNAASSSSS) are compositionally biased toward low complexity. 2 C2H2-type zinc fingers span residues 148 to 170 (FECD…RATH) and 211 to 233 (HRCN…MRCH).

Interacts (via the EAR motif) with TPL. Expressed exclusively in pollen.

The protein localises to the nucleus. Functionally, mediates the regulation of male germ cell division by DUO1. The chain is Zinc finger protein ZAT2 from Arabidopsis thaliana (Mouse-ear cress).